The primary structure comprises 520 residues: 2-isopropylmalate synthase (520 aa).

One can recognise a Pyruvate carboxyltransferase domain in the interval 5-267 (VIIFDTTLRD…HTNINHQEIY (263 aa)). Mn(2+)-binding residues include aspartate 14, histidine 202, histidine 204, and asparagine 238. Residues 392–520 (RLDYFSVQSG…RLQQNNQEMV (129 aa)) are regulatory domain.

This sequence belongs to the alpha-IPM synthase/homocitrate synthase family. LeuA type 1 subfamily. As to quaternary structure, homodimer. Mn(2+) is required as a cofactor.

Its subcellular location is the cytoplasm. The enzyme catalyses 3-methyl-2-oxobutanoate + acetyl-CoA + H2O = (2S)-2-isopropylmalate + CoA + H(+). The protein operates within amino-acid biosynthesis; L-leucine biosynthesis; L-leucine from 3-methyl-2-oxobutanoate: step 1/4. Functionally, catalyzes the condensation of the acetyl group of acetyl-CoA with 3-methyl-2-oxobutanoate (2-ketoisovalerate) to form 3-carboxy-3-hydroxy-4-methylpentanoate (2-isopropylmalate). This chain is 2-isopropylmalate synthase, found in Yersinia enterocolitica serotype O:8 / biotype 1B (strain NCTC 13174 / 8081).